A 349-amino-acid polypeptide reads, in one-letter code: METNFSIPLNETEEVLPEPAGHTVLWIFSLLVHGVTFVFGVLGNGLVIWVAGFRMTRTVNTICYLNLALADFSFSAILPFRMVSVAMREKWPFGSFLCKLVHVMIDINLFVSVYLITIIALDRCICVLHPAWAQNHRTMSLAKRVMTGLWILTIVLTLPNFIFWTTIRTTNGDTYCIFNFAFWGDTAVERLNVFITMAKVFLILHFIIGFSMPMSIITVCYGIIAAKIHRNHMIKSSRPLRVFAAVVASFFICWFPYELIGILMAVWLKEMLLNGKYKIILVLINPTSSLAFFNSCLNPILYVFMGRNFQERLIRSLPTSLERALTEVPDSAQTSNTHTTSASPPEETE.

Residues 1 to 27 are Extracellular-facing; the sequence is METNFSIPLNETEEVLPEPAGHTVLWI. 2 N-linked (GlcNAc...) asparagine glycosylation sites follow: N4 and N10. Residues 28 to 50 form a helical membrane-spanning segment; it reads FSLLVHGVTFVFGVLGNGLVIWV. Residues 51 to 61 lie on the Cytoplasmic side of the membrane; it reads AGFRMTRTVNT. The helical transmembrane segment at 62-83 threads the bilayer; it reads ICYLNLALADFSFSAILPFRMV. Residues 84–100 are Extracellular-facing; it reads SVAMREKWPFGSFLCKL. C98 and C176 are oxidised to a cystine. Residues 101–121 form a helical membrane-spanning segment; that stretch reads VHVMIDINLFVSVYLITIIAL. The Cytoplasmic segment spans residues 122 to 140; the sequence is DRCICVLHPAWAQNHRTMS. A helical transmembrane segment spans residues 141-162; that stretch reads LAKRVMTGLWILTIVLTLPNFI. The Extracellular portion of the chain corresponds to 163–205; it reads FWTTIRTTNGDTYCIFNFAFWGDTAVERLNVFITMAKVFLILH. The helical transmembrane segment at 206-226 threads the bilayer; it reads FIIGFSMPMSIITVCYGIIAA. Over 227 to 242 the chain is Cytoplasmic; that stretch reads KIHRNHMIKSSRPLRV. A helical transmembrane segment spans residues 243–266; it reads FAAVVASFFICWFPYELIGILMAV. Over 267-286 the chain is Extracellular; it reads WLKEMLLNGKYKIILVLINP. Residues 287-306 traverse the membrane as a helical segment; it reads TSSLAFFNSCLNPILYVFMG. Residues 307 to 349 are Cytoplasmic-facing; sequence RNFQERLIRSLPTSLERALTEVPDSAQTSNTHTTSASPPEETE. The tract at residues 327 to 349 is disordered; it reads EVPDSAQTSNTHTTSASPPEETE. Over residues 331 to 343 the composition is skewed to polar residues; it reads SAQTSNTHTTSAS.

Belongs to the G-protein coupled receptor 1 family.

It is found in the cell membrane. Low affinity receptor for N-formyl-methionyl peptides, which are powerful neutrophils chemotactic factors. Binding of FMLP to the receptor causes activation of neutrophils. This response is mediated via a G-protein that activates a phosphatidylinositol-calcium second messenger system. The polypeptide is N-formyl peptide receptor 3 (FPR3) (Pan troglodytes (Chimpanzee)).